Reading from the N-terminus, the 658-residue chain is MRSRALLFLLFVLLPMLPAPPAGQPSGRRRGQAGCGGGFWGDRVDSQPFALPYIHPTNPFASDIPAAAGTGARPRQPIRPLGSAWRDQSQRPAASTRRRPAPAGASPLTAVAPAPDTAPVPDADSRGAILRRQYNLSTSPLTSTIATGTNFVLYAAPLSPLLPLQDGTNTHIMATEASNYAQYRVVRATIRYRPLVPNAVGGYAISISFWPQTTTTPTSVDMNSITSTDVRILVQPGIASELVTPSERLHYRNQGWRSVETSGVAEEEATSGLVMLCIHGSPVNSYTNTPYTGALGLLDFALELEFRNLTPGNTNTRVSRYSSSARHKLRRGPDGTAELTTTAATRFMKDLHFTGTNGVGEVGRGIALTLFNLADTLLGGLPTELISSAGGQLFYSRPVVSANGELTVKLYTSVENAQQDKGVAIPHDIDLGESRVVIQDYDNQHEQDRPTPSPAPSRPFSVLRANDVLWLSLTAAEYDQTTYGSSTNPMYVSDTVTFVNVATGAQGVSRSLDWSKVTLDGRPLTTIQQYSKTFYVLPLRGKLSFWEAGTTKAGYPYNYNTTASDQILIENAAGHRVCISTYTTNLGSGPVSVSAVGVLAPHSALAALEDTADYPARAHTFDDFCPECRALGLQGCAFQSTVGELQRLKMKVGKTREY.

An N-terminal signal peptide occupies residues 1–19; the sequence is MRSRALLFLLFVLLPMLPA. A disordered region spans residues 62-124; that stretch reads SDIPAAAGTG…PDTAPVPDAD (63 aa). Residues 91 to 122 show a composition bias toward low complexity; sequence RPAASTRRRPAPAGASPLTAVAPAPDTAPVPD. Asparagine 135 and asparagine 308 each carry an N-linked (GlcNAc...) asparagine; by host glycan. Positions 366-392 are particle formation; the sequence is IALTLFNLADTLLGGLPTELISSAGGQ. N-linked (GlcNAc...) asparagine; by host glycosylation occurs at asparagine 560. The oligomerization stretch occupies residues 583 to 608; it reads TTNLGSGPVSVSAVGVLAPHSALAAL.

This sequence belongs to the hepevirus capsid protein family. In terms of assembly, homodimer. As to quaternary structure, self-assembles to form the capsid. The capsid is dominated by dimers that define the 30 morphological units. Interacts with phosphorylated protein ORF3. Interacts with host TMEM134. Interacts with host ASGR1 and ASGR2; these interactions facilitate infection of host hepatocytes. Post-translationally, cleaved by host protease in the N-terminus. In terms of processing, N-glycosylated. Not N-glycosylated. The C-terminus of the capsid protein ORF2 is truncated in non-enveloped virions shedded in feces, probably due to host proteases.

It localises to the secreted. Its subcellular location is the virion. It is found in the host cytoplasm. The protein resides in the host endoplasmic reticulum. The protein localises to the host Golgi apparatus. It localises to the host cell surface. Its subcellular location is the host nucleus. Its function is as follows. Plays a role in the inhibition of host antibody-mediated neutralization without blocking viral cell entry. Forms an icosahedral capsid with a T=1 symmetry and a 34 nm diameter. The capsid is composed of 60 copies linked to each other. Binds to the 5' end of the genomic RNA to mediate genome encapsidation. Binds to heparin surface proteoglycans (HSPGs) to mediate viral entry. Additionally, the interactions with host ASGR1 and ASGR2 facilitate viral infection of hepatocytes. Inhibits IFN production by blocking host TBK1-induced IRF3 phosphorylation. The nuclear form probably modulates host gene expression. The protein is Pro-secreted protein ORF2 of Bandicota bengalensis (lesser bandicoot rat).